The sequence spans 485 residues: Alpha-amylase (485 aa).

Residues 1-18 (MQHLSILLVVLGSSIAFA) form the signal peptide. Position 19 is a pyrrolidone carboxylic acid (glutamine 19). Cysteine 46 and cysteine 102 are oxidised to a cystine. The Ca(2+) site is built by asparagine 116, arginine 163, and aspartate 172. A disulfide bond links cysteine 152 and cysteine 165. Arginine 200 is a chloride binding site. Residue aspartate 202 is the Nucleophile of the active site. A Ca(2+)-binding site is contributed by histidine 206. The active-site Proton donor is the glutamate 238. Asparagine 301 lines the chloride pocket. Cysteine 369 and cysteine 375 are oxidised to a cystine. N-linked (GlcNAc...) asparagine glycosylation is found at asparagine 423 and asparagine 449. Cysteine 440 and cysteine 452 are oxidised to a cystine.

This sequence belongs to the glycosyl hydrolase 13 family. Monomer. Ca(2+) is required as a cofactor. Chloride serves as cofactor.

The catalysed reaction is Endohydrolysis of (1-&gt;4)-alpha-D-glucosidic linkages in polysaccharides containing three or more (1-&gt;4)-alpha-linked D-glucose units.. Involved in the digestion of starch. The protein is Alpha-amylase of Hypothenemus hampei (Coffee berry borer).